The following is a 176-amino-acid chain: Japanin-like-RS (176 aa).

The signal sequence occupies residues 1 to 24; sequence MKVLLCLVCSFYIIVSSITTMTTG. Disulfide bonds link C52–C174 and C138–C162. N155 carries N-linked (GlcNAc...) asparagine glycosylation.

Belongs to the calycin superfamily. Lipocalin family. Homodimer; non-disulfide-linked. Each monomer accommodates one molecule of cholesterol in a pocket. Expressed in salivary glands.

It localises to the secreted. In terms of biological role, salivary tick protein that modulates host immune response. This protein blocks dendritic cell (DC) differentiation from monocytes. In addition, it inhibits up-regulation of costimulatory molecules and pro-inflammatory cytokines in response to stimuli and promotes up-regulation of co-inhibitory molecules and the anti-inflammatory cytokine interleukin-10. It has a pocket to accomodate cholesterol, which may have immune-modulatory roles, either directly or through interactions with the host gut microbiota. The protein is Japanin-like-RS of Rhipicephalus sanguineus (Brown dog tick).